The sequence spans 601 residues: Elongation factor 4 (601 aa).

The tr-type G domain maps to 5–187 (IRKKNFCIIA…AICKHVPSPR (183 aa)). GTP-binding positions include 17–22 (DHGKST) and 134–137 (NKID).

Belongs to the TRAFAC class translation factor GTPase superfamily. Classic translation factor GTPase family. LepA subfamily.

It is found in the cell inner membrane. It catalyses the reaction GTP + H2O = GDP + phosphate + H(+). In terms of biological role, required for accurate and efficient protein synthesis under certain stress conditions. May act as a fidelity factor of the translation reaction, by catalyzing a one-codon backward translocation of tRNAs on improperly translocated ribosomes. Back-translocation proceeds from a post-translocation (POST) complex to a pre-translocation (PRE) complex, thus giving elongation factor G a second chance to translocate the tRNAs correctly. Binds to ribosomes in a GTP-dependent manner. This Borrelia garinii subsp. bavariensis (strain ATCC BAA-2496 / DSM 23469 / PBi) (Borreliella bavariensis) protein is Elongation factor 4.